A 110-amino-acid polypeptide reads, in one-letter code: NADH dehydrogenase [ubiquinone] iron-sulfur protein 6, mitochondrial (110 aa).

The N-terminal 22 residues, 1-22, are a transit peptide targeting the mitochondrion; the sequence is MASNLLKALIRSQILPSSRRNF.

Belongs to the complex I NDUFS6 subunit family. Complex I is composed of at least 49 different subunits. This is a component of the iron-sulfur (IP) fragment of the enzyme.

Its subcellular location is the mitochondrion inner membrane. In terms of biological role, accessory subunit of the mitochondrial membrane respiratory chain NADH dehydrogenase (Complex I), that is believed not to be involved in catalysis. Complex I functions in the transfer of electrons from NADH to the respiratory chain. The immediate electron acceptor for the enzyme is believed to be ubiquinone. The chain is NADH dehydrogenase [ubiquinone] iron-sulfur protein 6, mitochondrial from Arabidopsis thaliana (Mouse-ear cress).